Here is a 263-residue protein sequence, read N- to C-terminus: Glutamate racemase (263 aa).

Substrate-binding positions include 13–14 (DS) and 45–46 (YG). Residue C77 is the Proton donor/acceptor of the active site. A substrate-binding site is contributed by 78–79 (NT). C185 acts as the Proton donor/acceptor in catalysis. Residue 186–187 (TH) coordinates substrate.

This sequence belongs to the aspartate/glutamate racemases family.

It catalyses the reaction L-glutamate = D-glutamate. Its pathway is cell wall biogenesis; peptidoglycan biosynthesis. In terms of biological role, provides the (R)-glutamate required for cell wall biosynthesis. This is Glutamate racemase from Vibrio vulnificus (strain YJ016).